The sequence spans 178 residues: Large ribosomal subunit protein uL6 (178 aa).

Belongs to the universal ribosomal protein uL6 family. Part of the 50S ribosomal subunit.

Its function is as follows. This protein binds to the 23S rRNA, and is important in its secondary structure. It is located near the subunit interface in the base of the L7/L12 stalk, and near the tRNA binding site of the peptidyltransferase center. The sequence is that of Large ribosomal subunit protein uL6 from Lactococcus lactis subsp. cremoris (strain MG1363).